A 382-amino-acid polypeptide reads, in one-letter code: Protein-arginine rhamnosyltransferase (382 aa).

18–19 (FG) is a binding site for dTDP. The Proton acceptor role is filled by aspartate 20. DTDP-beta-L-rhamnose contacts are provided by residues aspartate 20, tyrosine 187, 250–252 (VPQ), and 268–272 (RGEDS). DTDP contacts are provided by residues tyrosine 187, 250–252 (VPQ), and 268–272 (RGEDS). Glutamate 270 is an active-site residue.

The protein belongs to the glycosyltransferase 104 family.

It catalyses the reaction dTDP-beta-L-rhamnose + L-arginyl-[protein] = N(omega)-(alpha-L-rhamnosyl)-L-arginyl-[protein] + dTDP + H(+). Its function is as follows. Protein-arginine rhamnosyltransferase that catalyzes the transfer of a single rhamnose to elongation factor P (EF-P) on 'Lys-32', a modification required for EF-P-dependent rescue of polyproline stalled ribosomes. This is Protein-arginine rhamnosyltransferase from Neisseria meningitidis serogroup B / serotype 15 (strain H44/76).